The chain runs to 139 residues: D-ribose pyranase (139 aa).

H20 acts as the Proton donor in catalysis. Substrate contacts are provided by residues D28, H106, and Y128–N130.

The protein belongs to the RbsD / FucU family. RbsD subfamily. In terms of assembly, homodecamer.

The protein localises to the cytoplasm. It catalyses the reaction beta-D-ribopyranose = beta-D-ribofuranose. It participates in carbohydrate metabolism; D-ribose degradation; D-ribose 5-phosphate from beta-D-ribopyranose: step 1/2. Catalyzes the interconversion of beta-pyran and beta-furan forms of D-ribose. This is D-ribose pyranase from Citrobacter koseri (strain ATCC BAA-895 / CDC 4225-83 / SGSC4696).